Reading from the N-terminus, the 2238-residue chain is Protein Ycf2 (2238 aa).

1579-1586 (GSIGTGRS) contacts ATP.

It belongs to the Ycf2 family.

The protein localises to the plastid. In terms of biological role, probable ATPase of unknown function. Its presence in a non-photosynthetic plant (Epifagus virginiana) and experiments in tobacco indicate that it has an essential function which is probably not related to photosynthesis. In Cuscuta exaltata (Tall dodder), this protein is Protein Ycf2.